The following is a 74-amino-acid chain: ATP synthase subunit 9, mitochondrial (74 aa).

The next 2 membrane-spanning stretches (helical) occupy residues 8–28 (IGAG…GNVF) and 50–70 (ILGF…AFLI).

Belongs to the ATPase C chain family. In terms of assembly, F-type ATPases have 2 components, CF(1) - the catalytic core - and CF(0) - the membrane proton channel. CF(1) has five subunits: alpha(3), beta(3), gamma(1), delta(1), epsilon(1). CF(0) has three main subunits: a, b and c.

The protein localises to the mitochondrion membrane. In terms of biological role, this protein is one of the chains of the nonenzymatic membrane component (F0) of mitochondrial ATPase. The chain is ATP synthase subunit 9, mitochondrial (ATP9) from Triticum aestivum (Wheat).